The sequence spans 443 residues: Glutamyl-tRNA reductase (443 aa).

Substrate is bound by residues 55–58 (TCNR), Ser113, 118–120 (EPQ), and Gln124. Cys56 acts as the Nucleophile in catalysis. Position 193–198 (193–198 (GAGEMI)) interacts with NADP(+).

This sequence belongs to the glutamyl-tRNA reductase family. Homodimer.

The catalysed reaction is (S)-4-amino-5-oxopentanoate + tRNA(Glu) + NADP(+) = L-glutamyl-tRNA(Glu) + NADPH + H(+). It participates in porphyrin-containing compound metabolism; protoporphyrin-IX biosynthesis; 5-aminolevulinate from L-glutamyl-tRNA(Glu): step 1/2. The protein operates within porphyrin-containing compound metabolism; chlorophyll biosynthesis. Catalyzes the NADPH-dependent reduction of glutamyl-tRNA(Glu) to glutamate 1-semialdehyde (GSA). This Methylibium petroleiphilum (strain ATCC BAA-1232 / LMG 22953 / PM1) protein is Glutamyl-tRNA reductase.